We begin with the raw amino-acid sequence, 287 residues long: Elongation factor Ts (287 aa).

Positions 80 to 83 are involved in Mg(2+) ion dislocation from EF-Tu; it reads TDFL.

Belongs to the EF-Ts family.

It is found in the cytoplasm. Its function is as follows. Associates with the EF-Tu.GDP complex and induces the exchange of GDP to GTP. It remains bound to the aminoacyl-tRNA.EF-Tu.GTP complex up to the GTP hydrolysis stage on the ribosome. The protein is Elongation factor Ts of Pseudomonas savastanoi pv. phaseolicola (strain 1448A / Race 6) (Pseudomonas syringae pv. phaseolicola (strain 1448A / Race 6)).